Reading from the N-terminus, the 378-residue chain is POU domain, class 3, transcription factor 2 (378 aa).

Disordered regions lie at residues 1 to 28, 86 to 118, and 151 to 205; these read MATTASNHYNILTSSPSIVHSEPGSMQQ, SPRDEMHNSSNLQHQSRPPHLVHQTHGNHHDSR, and LIPG…TPTS. Residues 164 to 181 show a composition bias toward basic and acidic residues; it reads MRDAHEDHHSPHLSDHGH. One can recognise a POU-specific domain in the interval 200–274; it reads EDTPTSDDLE…LLNKWLEEAD (75 aa). S279 carries the post-translational modification Phosphoserine. The homeobox DNA-binding region spans 292–351; sequence KRKKRTSIEVSVKGALESHFLKCPKPAASEITSLADSLQLEKEVVRVWFCNRRQKEKRMT. The segment at 347-378 is disordered; sequence EKRMTPPGGPLPGTEDVYGDTPPHHGVQTPVQ.

It belongs to the POU transcription factor family. Class-3 subfamily. Predominantly expressed in the central nervous system, with strong expression in the cerebellum.

Its subcellular location is the nucleus. Functionally, transcription factor that may play important roles in patterning the embryonic brain. The chain is POU domain, class 3, transcription factor 2 (pou3f2) from Danio rerio (Zebrafish).